Here is a 394-residue protein sequence, read N- to C-terminus: Aspergillopepsin-1 (394 aa).

An N-terminal signal peptide occupies residues 1–20 (MVVFSKTAALVLGLSSAVSA). A propeptide spans 21–69 (APAPTRKGFTINQIARPANKTRTINLPGMYARSLAKFGGTVPQSVKEAA) (activation peptide). The region spanning 85–391 (YLTPVTVGKS…NSEGPKLGFA (307 aa)) is the Peptidase A1 domain. Catalysis depends on residues aspartate 101 and aspartate 283. Cysteine 319 and cysteine 354 are disulfide-bonded.

The protein belongs to the peptidase A1 family. As to quaternary structure, monomer.

Its subcellular location is the secreted. It carries out the reaction Hydrolysis of proteins with broad specificity. Generally favors hydrophobic residues in P1 and P1', but also accepts Lys in P1, which leads to activation of trypsinogen. Does not clot milk.. In terms of biological role, secreted aspartic endopeptidase that allows assimilation of proteinaceous substrates. The scissile peptide bond is attacked by a nucleophilic water molecule activated by two aspartic residues in the active site. Shows a broad primary substrate specificity. Favors hydrophobic residues at the P1 and P1' positions, but also accepts a lysine residue in the P1 position, leading to the activation of trypsinogen and chymotrypsinogen A. This Aspergillus niger (strain ATCC MYA-4892 / CBS 513.88 / FGSC A1513) protein is Aspergillopepsin-1 (pepA).